A 319-amino-acid polypeptide reads, in one-letter code: Beta-ketoacyl-[acyl-carrier-protein] synthase III (319 aa).

Residues Cys-113 and His-246 contribute to the active site. Positions 247–251 are ACP-binding; that stretch reads QANLR. The active site involves Asn-276.

Belongs to the thiolase-like superfamily. FabH family. As to quaternary structure, homodimer.

Its subcellular location is the cytoplasm. The enzyme catalyses malonyl-[ACP] + acetyl-CoA + H(+) = 3-oxobutanoyl-[ACP] + CO2 + CoA. The protein operates within lipid metabolism; fatty acid biosynthesis. Its function is as follows. Catalyzes the condensation reaction of fatty acid synthesis by the addition to an acyl acceptor of two carbons from malonyl-ACP. Catalyzes the first condensation reaction which initiates fatty acid synthesis and may therefore play a role in governing the total rate of fatty acid production. Possesses both acetoacetyl-ACP synthase and acetyl transacylase activities. Its substrate specificity determines the biosynthesis of branched-chain and/or straight-chain of fatty acids. The protein is Beta-ketoacyl-[acyl-carrier-protein] synthase III of Laribacter hongkongensis (strain HLHK9).